Consider the following 352-residue polypeptide: Small ribosomal subunit biogenesis GTPase RsgA (352 aa).

Residues 1-11 (MTKRKLSKGQQ) are compositionally biased toward basic residues. The tract at residues 1–35 (MTKRKLSKGQQRRVQENHKKRLQSKEKKNHVELDD) is disordered. Residues 13–33 (RVQENHKKRLQSKEKKNHVEL) are compositionally biased toward basic and acidic residues. A CP-type G domain is found at 114–276 (YYDGIKPIAA…VIDSPGVREF (163 aa)). GTP-binding positions include 162–165 (NKVD) and 216–224 (GQSGVGKSS). Residues C300, C305, H307, and C313 each coordinate Zn(2+).

It belongs to the TRAFAC class YlqF/YawG GTPase family. RsgA subfamily. In terms of assembly, monomer. Associates with 30S ribosomal subunit, binds 16S rRNA. It depends on Zn(2+) as a cofactor.

Its subcellular location is the cytoplasm. Functionally, one of several proteins that assist in the late maturation steps of the functional core of the 30S ribosomal subunit. Helps release RbfA from mature subunits. May play a role in the assembly of ribosomal proteins into the subunit. Circularly permuted GTPase that catalyzes slow GTP hydrolysis, GTPase activity is stimulated by the 30S ribosomal subunit. The polypeptide is Small ribosomal subunit biogenesis GTPase RsgA (Proteus mirabilis (strain HI4320)).